The following is a 309-amino-acid chain: Olfactory receptor 1A1 (309 aa).

The Extracellular portion of the chain corresponds to 1–25 (MRENNQSSTLEFILLGVTGQQEQED). Asn5 carries N-linked (GlcNAc...) asparagine glycosylation. The helical transmembrane segment at 26-49 (FFYILFLFIYPITLIGNLLIVLAI) threads the bilayer. The Cytoplasmic portion of the chain corresponds to 50-57 (CSDVRLHN). The chain crosses the membrane as a helical span at residues 58–79 (PMYFLLANLSLVDIFFSSVTIP). The Extracellular portion of the chain corresponds to 80–100 (KMLANHLLGSKSISFGGCLTQ). A disulfide bridge connects residues Cys97 and Cys189. The chain crosses the membrane as a helical span at residues 101–120 (MYFMIALGNTDSYILAAMAY). The Cytoplasmic portion of the chain corresponds to 121-139 (DRAVAISRPLHYTTIMSPR). A helical transmembrane segment spans residues 140 to 158 (SCIWLIAGSWVIGNANALP). The Extracellular segment spans residues 159–195 (HTLLTASLSFCGNQEVANFYCDITPLLKLSCSDIHFH). A helical membrane pass occupies residues 196–218 (VKMMYLGVGIFSVPLLCIIVSYI). Residues 219 to 235 (RVFSTVFQVPSTKGVLK) lie on the Cytoplasmic side of the membrane. The helical transmembrane segment at 236 to 258 (AFSTCGSHLTVVSLYYGTVMGTY) threads the bilayer. At 259-270 (FRPLTNYSLKDA) the chain is on the extracellular side. Asn264 carries N-linked (GlcNAc...) asparagine glycosylation. A helical transmembrane segment spans residues 271–290 (VITVMYTAVTPMLNPFIYSL). Over 291-309 (RNRDMKAALRKLFNKRISS) the chain is Cytoplasmic.

The protein belongs to the G-protein coupled receptor 1 family.

The protein localises to the cell membrane. In terms of biological role, odorant receptor. This is Olfactory receptor 1A1 (OR1A1) from Homo sapiens (Human).